We begin with the raw amino-acid sequence, 148 residues long: Iron/alpha-ketoglutarate-dependent dioxygenase ausU (148 aa).

2 residues coordinate Fe cation: H45 and D47.

This sequence belongs to the PhyH family. As to quaternary structure, homodimer. Fe cation serves as cofactor.

It participates in secondary metabolite biosynthesis; terpenoid biosynthesis. Functionally, iron/alpha-ketoglutarate-dependent dioxygenase; part of the gene cluster B that mediates the biosynthesis of austinol and dehydroaustinol, two fungal meroterpenoids. The first step of the pathway is the synthesis of 3,5-dimethylorsellinic acid by the polyketide synthase ausA. 3,5-dimethylorsellinic acid is then prenylated by the polyprenyl transferase ausN. Further epoxidation by the FAD-dependent monooxygenase ausM and cyclization by the probable terpene cyclase ausL lead to the formation of protoaustinoid A. Protoaustinoid A is then oxidized to spiro-lactone preaustinoid A3 by the combined action of the FAD-binding monooxygenases ausB and ausC, and the dioxygenase ausE. Acid-catalyzed keto-rearrangement and ring contraction of the tetraketide portion of preaustinoid A3 by ausJ lead to the formation of preaustinoid A4. The aldo-keto reductase ausK, with the help of ausH, is involved in the next step by transforming preaustinoid A4 into isoaustinone which is in turn hydroxylated by the P450 monooxygenase ausI to form austinolide. Finally, the cytochrome P450 monooxygenase ausG modifies austinolide to austinol. Austinol can be further modified to dehydroaustinol which forms a diffusible complex with diorcinol that initiates conidiation. Due to genetic rearrangements of the clusters and the subsequent loss of some enzymes, the end products of the Emericella nidulans austinoid biosynthesis clusters are austinol and dehydroaustinol, even if additional enzymes, such as the O-acetyltransferase ausQ and the cytochrome P450 monooxygenase ausR are still functional. The polypeptide is Iron/alpha-ketoglutarate-dependent dioxygenase ausU (Emericella nidulans (strain FGSC A4 / ATCC 38163 / CBS 112.46 / NRRL 194 / M139) (Aspergillus nidulans)).